The chain runs to 63 residues: Cytochrome c oxidase subunit 7C, mitochondrial (63 aa).

The transit peptide at 1–16 (MLGQSIRRFTTSVVRR) directs the protein to the mitochondrion. The Mitochondrial matrix portion of the chain corresponds to 17–33 (SHYEEGPGKNIPFSVEN). Position 25 is an N6-acetyllysine; alternate (Lys-25). An N6-succinyllysine; alternate modification is found at Lys-25. The helical transmembrane segment at 34–60 (KWRLLAMMTLFFGSGFAAPFFIVRHQL) threads the bilayer. The Mitochondrial intermembrane portion of the chain corresponds to 61–63 (LKK).

Belongs to the cytochrome c oxidase VIIc family. In terms of assembly, component of the cytochrome c oxidase (complex IV, CIV), a multisubunit enzyme composed of 14 subunits. The complex is composed of a catalytic core of 3 subunits MT-CO1, MT-CO2 and MT-CO3, encoded in the mitochondrial DNA, and 11 supernumerary subunits COX4I1 (or COX4I2), COX5A, COX5B, COX6A2 (or COX6A1), COX6B1 (or COX6B2), COX6C, COX7A1 (or COX7A2), COX7B, COX7C, COX8B and NDUFA4, which are encoded in the nuclear genome. The complex exists as a monomer or a dimer and forms supercomplexes (SCs) in the inner mitochondrial membrane with NADH-ubiquinone oxidoreductase (complex I, CI) and ubiquinol-cytochrome c oxidoreductase (cytochrome b-c1 complex, complex III, CIII), resulting in different assemblies (supercomplex SCI(1)III(2)IV(1) and megacomplex MCI(2)III(2)IV(2)). Interacts with RAB5IF. As to expression, liver, heart, muscle and brain, contain the same isoform of COX VIIc, but at different concentrations.

The protein localises to the mitochondrion inner membrane. The protein operates within energy metabolism; oxidative phosphorylation. In terms of biological role, component of the cytochrome c oxidase, the last enzyme in the mitochondrial electron transport chain which drives oxidative phosphorylation. The respiratory chain contains 3 multisubunit complexes succinate dehydrogenase (complex II, CII), ubiquinol-cytochrome c oxidoreductase (cytochrome b-c1 complex, complex III, CIII) and cytochrome c oxidase (complex IV, CIV), that cooperate to transfer electrons derived from NADH and succinate to molecular oxygen, creating an electrochemical gradient over the inner membrane that drives transmembrane transport and the ATP synthase. Cytochrome c oxidase is the component of the respiratory chain that catalyzes the reduction of oxygen to water. Electrons originating from reduced cytochrome c in the intermembrane space (IMS) are transferred via the dinuclear copper A center (CU(A)) of subunit 2 and heme A of subunit 1 to the active site in subunit 1, a binuclear center (BNC) formed by heme A3 and copper B (CU(B)). The BNC reduces molecular oxygen to 2 water molecules using 4 electrons from cytochrome c in the IMS and 4 protons from the mitochondrial matrix. This Bos taurus (Bovine) protein is Cytochrome c oxidase subunit 7C, mitochondrial (COX7C).